Consider the following 366-residue polypeptide: MMKQTIAVICGGRSGEHEVSLTSAQSIVDALDRFRFNVLTIGIDRHGAWWLGSNVIDNLRKGQQPYGQRVYFIPDPTCPGLIEENPVTRKPVPVDVFFPVLHGPNGEDGTIQGLFEAANVPYVGCGVLASACGMDKAIMKALFAQSDLPQLPYLVVLRNRWESAREQVIDEVEDRLGYPCFVKPANMGSSVGISKATNRAELVAAFDDAVRYDRKLIVEKGINVREIEVSVLGNDEVVASVPGEIVPAHEFYDYDAKYAAADSRLLIPAPIAAADVATFQEMAIRAFRAIDGSGLSRVDFLLDKNSGEVYINEINTLPGFTSISMYPKLWEATGIPYGELLSRLVDLGLARYREKQRNATERLPRL.

In terms of domain architecture, ATP-grasp spans 140 to 346; that stretch reads KALFAQSDLP…YGELLSRLVD (207 aa). 173 to 228 contacts ATP; the sequence is EDRLGYPCFVKPANMGSSVGISKATNRAELVAAFDDAVRYDRKLIVEKGINVREIE. Mg(2+)-binding residues include Asp-299, Glu-313, and Asn-315.

It belongs to the D-alanine--D-alanine ligase family. Mg(2+) serves as cofactor. Mn(2+) is required as a cofactor.

The protein localises to the cytoplasm. It carries out the reaction 2 D-alanine + ATP = D-alanyl-D-alanine + ADP + phosphate + H(+). It participates in cell wall biogenesis; peptidoglycan biosynthesis. Cell wall formation. The chain is D-alanine--D-alanine ligase from Heliobacterium modesticaldum (strain ATCC 51547 / Ice1).